Here is a 131-residue protein sequence, read N- to C-terminus: Small ribosomal subunit protein eS24 (131 aa).

Methionine 1 is subject to N-acetylmethionine. Phosphothreonine is present on threonine 9. Lysine 37 is covalently cross-linked (Glycyl lysine isopeptide (Lys-Gly) (interchain with G-Cter in SUMO2)). The span at 90–100 (RLARHGLYEKK) shows a compositional bias: basic and acidic residues. The interval 90-131 (RLARHGLYEKKKTSRKQRKERKNRMKKVRGTAKANVGAGKKK) is disordered. Positions 101–119 (KTSRKQRKERKNRMKKVRG) are enriched in basic residues.

This sequence belongs to the eukaryotic ribosomal protein eS24 family. Component of the small ribosomal subunit. Part of the small subunit (SSU) processome, composed of more than 70 proteins and the RNA chaperone small nucleolar RNA (snoRNA) U3.

It localises to the cytoplasm. Its subcellular location is the nucleus. The protein resides in the nucleolus. Functionally, component of the small ribosomal subunit. The ribosome is a large ribonucleoprotein complex responsible for the synthesis of proteins in the cell. Required for processing of pre-rRNA and maturation of 40S ribosomal subunits. Part of the small subunit (SSU) processome, first precursor of the small eukaryotic ribosomal subunit. During the assembly of the SSU processome in the nucleolus, many ribosome biogenesis factors, an RNA chaperone and ribosomal proteins associate with the nascent pre-rRNA and work in concert to generate RNA folding, modifications, rearrangements and cleavage as well as targeted degradation of pre-ribosomal RNA by the RNA exosome. The sequence is that of Small ribosomal subunit protein eS24 (RPS24) from Pongo abelii (Sumatran orangutan).